The primary structure comprises 224 residues: Cytidylate kinase (224 aa).

Position 11–19 (glycine 11–threonine 19) interacts with ATP.

This sequence belongs to the cytidylate kinase family. Type 1 subfamily.

It is found in the cytoplasm. The enzyme catalyses CMP + ATP = CDP + ADP. The catalysed reaction is dCMP + ATP = dCDP + ADP. The sequence is that of Cytidylate kinase from Listeria monocytogenes serotype 4a (strain HCC23).